The following is a 129-amino-acid chain: Small ribosomal subunit protein uS8 (129 aa).

This sequence belongs to the universal ribosomal protein uS8 family. As to quaternary structure, part of the 30S ribosomal subunit. Contacts proteins S5 and S12.

One of the primary rRNA binding proteins, it binds directly to 16S rRNA central domain where it helps coordinate assembly of the platform of the 30S subunit. The polypeptide is Small ribosomal subunit protein uS8 (Mesoplasma florum (strain ATCC 33453 / NBRC 100688 / NCTC 11704 / L1) (Acholeplasma florum)).